Reading from the N-terminus, the 220-residue chain is Flavin-dependent thymidylate synthase (220 aa).

A ThyX domain is found at 1–208; it reads MKIDILDKGF…PWTFEAFLKY (208 aa). FAD contacts are provided by residues T55, 78 to 80, and E86; that span reads RHR. Residues 75–78, 86–90, and R147 each bind dUMP; these read QWFR and ELSGR. The ThyX motif signature appears at 78-88; it reads RHRIASYNELS. FAD is bound by residues 163–165 and N169; that span reads NAR. Position 174 (R174) interacts with dUMP. Residue R174 is the Involved in ionization of N3 of dUMP, leading to its activation of the active site.

This sequence belongs to the thymidylate synthase ThyX family. Homotetramer. FAD is required as a cofactor.

It catalyses the reaction dUMP + (6R)-5,10-methylene-5,6,7,8-tetrahydrofolate + NADPH + H(+) = dTMP + (6S)-5,6,7,8-tetrahydrofolate + NADP(+). Its pathway is pyrimidine metabolism; dTTP biosynthesis. Its function is as follows. Catalyzes the reductive methylation of 2'-deoxyuridine-5'-monophosphate (dUMP) to 2'-deoxythymidine-5'-monophosphate (dTMP) while utilizing 5,10-methylenetetrahydrofolate (mTHF) as the methyl donor, and NADPH and FADH(2) as the reductant. This Thermotoga sp. (strain RQ2) protein is Flavin-dependent thymidylate synthase.